The following is a 241-amino-acid chain: 2-C-methyl-D-erythritol 4-phosphate cytidylyltransferase (241 aa).

It belongs to the IspD/TarI cytidylyltransferase family. IspD subfamily.

It catalyses the reaction 2-C-methyl-D-erythritol 4-phosphate + CTP + H(+) = 4-CDP-2-C-methyl-D-erythritol + diphosphate. Its pathway is isoprenoid biosynthesis; isopentenyl diphosphate biosynthesis via DXP pathway; isopentenyl diphosphate from 1-deoxy-D-xylulose 5-phosphate: step 2/6. Catalyzes the formation of 4-diphosphocytidyl-2-C-methyl-D-erythritol from CTP and 2-C-methyl-D-erythritol 4-phosphate (MEP). This Alkaliphilus metalliredigens (strain QYMF) protein is 2-C-methyl-D-erythritol 4-phosphate cytidylyltransferase.